The sequence spans 274 residues: NH(3)-dependent NAD(+) synthetase (274 aa).

46-53 (GISGGQDS) is a binding site for ATP. Asp-52 provides a ligand contact to Mg(2+). Arg-140 provides a ligand contact to deamido-NAD(+). Thr-160 provides a ligand contact to ATP. Mg(2+) is bound at residue Glu-165. Deamido-NAD(+)-binding residues include Lys-173 and Asp-180. Lys-189 and Thr-211 together coordinate ATP. 260–261 (HK) lines the deamido-NAD(+) pocket.

It belongs to the NAD synthetase family. Homodimer.

It carries out the reaction deamido-NAD(+) + NH4(+) + ATP = AMP + diphosphate + NAD(+) + H(+). It participates in cofactor biosynthesis; NAD(+) biosynthesis; NAD(+) from deamido-NAD(+) (ammonia route): step 1/1. Catalyzes the ATP-dependent amidation of deamido-NAD to form NAD. Uses ammonia as a nitrogen source. This is NH(3)-dependent NAD(+) synthetase from Streptococcus gordonii (strain Challis / ATCC 35105 / BCRC 15272 / CH1 / DL1 / V288).